The primary structure comprises 894 residues: Kinesin-like protein KIN-UB (894 aa).

The interval 1–53 is disordered; it reads MAMASSRNGAVRGSMRPVSGANSSNLRSSSFKSRIPSSAPAPRRSSSASIGAA. Residues 19–50 show a composition bias toward low complexity; the sequence is SGANSSNLRSSSFKSRIPSSAPAPRRSSSASI. The region spanning 60-402 is the Kinesin motor domain; sequence RVRVAVRLRP…ILFGQRAMKV (343 aa). 145-152 provides a ligand contact to ATP; the sequence is GQTGTGKT. A D-BOX motif is present at residues 372 to 380; sequence RTSLIVTIG. Positions 423 to 588 form a coiled coil; that stretch reads VQLDKVIAEN…RSQLVQLTFE (166 aa). 2 disordered regions span residues 530-550 and 598-623; these read EEEVSKVKSQSTLKTRSGEGE and RGAPGNSYSGTDSLPSRHSQARESVN. A compositionally biased stretch (polar residues) spans 603 to 623; sequence NSYSGTDSLPSRHSQARESVN. 4 ARM repeats span residues 626-665, 667-707, 709-749, and 751-790; these read KAPFATLCEQVGLQKILQLLESDDANIRIHAVKVVANLAA, EANQ…NLAM, EVSQ…NLCG, and DKLQARLWSDGGIKALLGMVRCGHPDVLAQVARGIANFAK.

This sequence belongs to the TRAFAC class myosin-kinesin ATPase superfamily. Kinesin family. Ungrouped subfamily. As to quaternary structure, interacts (via C-terminus) with NEK5. As to expression, expressed in the basal regions and petioles of immature leaves and in the root elongation zone.

Its subcellular location is the cytoplasm. It localises to the cytoskeleton. Functionally, involved in the control of epidermal-cell morphogenesis in roots and helical growth of roots by promoting microtubule depolymerization and limiting the accumulation of endoplasmic microtubules. Seems to be involved in the control of cell-file rotation (or twisting). This is Kinesin-like protein KIN-UB from Arabidopsis thaliana (Mouse-ear cress).